We begin with the raw amino-acid sequence, 462 residues long: Argininosuccinate lyase (462 aa).

This sequence belongs to the lyase 1 family. Argininosuccinate lyase subfamily.

Its subcellular location is the cytoplasm. It carries out the reaction 2-(N(omega)-L-arginino)succinate = fumarate + L-arginine. It participates in amino-acid biosynthesis; L-arginine biosynthesis; L-arginine from L-ornithine and carbamoyl phosphate: step 3/3. In Prochlorococcus marinus (strain SARG / CCMP1375 / SS120), this protein is Argininosuccinate lyase.